The following is a 304-amino-acid chain: Oxygen-dependent coproporphyrinogen-III oxidase (304 aa).

Serine 95 provides a ligand contact to substrate. Residues histidine 99 and histidine 109 each coordinate a divalent metal cation. Histidine 109 acts as the Proton donor in catalysis. Substrate is bound at residue 111–113; sequence NVR. Positions 148 and 178 each coordinate a divalent metal cation. Residues 243 to 278 are important for dimerization; that stretch reads YVEFNLVYDRGTLFGLQSGGRTESILMSLPPLVRWR. Substrate is bound at residue 261 to 263; that stretch reads GGR.

The protein belongs to the aerobic coproporphyrinogen-III oxidase family. Homodimer. The cofactor is a divalent metal cation.

The protein resides in the cytoplasm. The enzyme catalyses coproporphyrinogen III + O2 + 2 H(+) = protoporphyrinogen IX + 2 CO2 + 2 H2O. It functions in the pathway porphyrin-containing compound metabolism; protoporphyrin-IX biosynthesis; protoporphyrinogen-IX from coproporphyrinogen-III (O2 route): step 1/1. In terms of biological role, involved in the heme biosynthesis. Catalyzes the aerobic oxidative decarboxylation of propionate groups of rings A and B of coproporphyrinogen-III to yield the vinyl groups in protoporphyrinogen-IX. The polypeptide is Oxygen-dependent coproporphyrinogen-III oxidase (Thioalkalivibrio sulfidiphilus (strain HL-EbGR7)).